The chain runs to 271 residues: Dermonecrotic toxin SpeSicTox-betaIF1 (271 aa).

His3 is an active-site residue. Mg(2+) is bound by residues Glu23 and Asp25. His39 (nucleophile) is an active-site residue. Disulfide bonds link Cys43/Cys49 and Cys45/Cys188. Asp83 serves as a coordination point for Mg(2+).

It belongs to the arthropod phospholipase D family. Class II subfamily. It depends on Mg(2+) as a cofactor. In terms of tissue distribution, expressed by the venom gland.

Its subcellular location is the secreted. It catalyses the reaction an N-(acyl)-sphingosylphosphocholine = an N-(acyl)-sphingosyl-1,3-cyclic phosphate + choline. It carries out the reaction an N-(acyl)-sphingosylphosphoethanolamine = an N-(acyl)-sphingosyl-1,3-cyclic phosphate + ethanolamine. The enzyme catalyses a 1-acyl-sn-glycero-3-phosphocholine = a 1-acyl-sn-glycero-2,3-cyclic phosphate + choline. The catalysed reaction is a 1-acyl-sn-glycero-3-phosphoethanolamine = a 1-acyl-sn-glycero-2,3-cyclic phosphate + ethanolamine. Functionally, dermonecrotic toxins cleave the phosphodiester linkage between the phosphate and headgroup of certain phospholipids (sphingolipid and lysolipid substrates), forming an alcohol (often choline) and a cyclic phosphate. This toxin acts on sphingomyelin (SM). It may also act on ceramide phosphoethanolamine (CPE), lysophosphatidylcholine (LPC) and lysophosphatidylethanolamine (LPE), but not on lysophosphatidylserine (LPS), and lysophosphatidylglycerol (LPG). It acts by transphosphatidylation, releasing exclusively cyclic phosphate products as second products. Induces dermonecrosis, hemolysis, increased vascular permeability, edema, inflammatory response, and platelet aggregation. In Sicarius peruensis (Six-eyed sand spider), this protein is Dermonecrotic toxin SpeSicTox-betaIF1.